Reading from the N-terminus, the 110-residue chain is MEVLAKHRFARTSAQKARLVADQIRGLPVSKALEILTFSPKKAAVLVKKVLDSAIANAEHNEGADIDELRVGAVFVDEGPTMKRIMPRAKGRADRIMKRTSHITVVVADR.

The protein belongs to the universal ribosomal protein uL22 family. In terms of assembly, part of the 50S ribosomal subunit.

Its function is as follows. This protein binds specifically to 23S rRNA; its binding is stimulated by other ribosomal proteins, e.g. L4, L17, and L20. It is important during the early stages of 50S assembly. It makes multiple contacts with different domains of the 23S rRNA in the assembled 50S subunit and ribosome. Functionally, the globular domain of the protein is located near the polypeptide exit tunnel on the outside of the subunit, while an extended beta-hairpin is found that lines the wall of the exit tunnel in the center of the 70S ribosome. The sequence is that of Large ribosomal subunit protein uL22 from Shewanella denitrificans (strain OS217 / ATCC BAA-1090 / DSM 15013).